Here is a 115-residue protein sequence, read N- to C-terminus: Small ribosomal subunit protein bS16 (115 aa).

Positions 81-115 are disordered; sequence GLAPKPTYNEQPKKSAPKAKAQERAKAAADAAAAA.

This sequence belongs to the bacterial ribosomal protein bS16 family.

The sequence is that of Small ribosomal subunit protein bS16 from Gluconobacter oxydans (strain 621H) (Gluconobacter suboxydans).